A 328-amino-acid polypeptide reads, in one-letter code: Probable cytosolic iron-sulfur protein assembly protein 1 (328 aa).

WD repeat units lie at residues Leu12 to Glu49, Ala54 to Glu93, Gly102 to Glu141, Glu148 to Ala187, Gly192 to Phe233, Val246 to Val284, and Ala291 to Glu328.

Belongs to the WD repeat CIA1 family. Interacts with NAR1.

The protein resides in the cytoplasm. Its subcellular location is the nucleus. Its function is as follows. Essential component of the cytosolic iron-sulfur (Fe/S) protein assembly machinery. Required for the maturation of extramitochondrial Fe/S proteins. In Eremothecium gossypii (strain ATCC 10895 / CBS 109.51 / FGSC 9923 / NRRL Y-1056) (Yeast), this protein is Probable cytosolic iron-sulfur protein assembly protein 1.